The sequence spans 320 residues: BTB and MATH domain-containing protein 36 (320 aa).

Residues 7 to 136 (KGSIRFEIQN…DKHAVLEVQI (130 aa)) enclose the MATH domain. A BTB domain is found at 160–227 (TDVVLVLEGK…IYPTHMLINS (68 aa)).

This chain is BTB and MATH domain-containing protein 36 (bath-36), found in Caenorhabditis elegans.